We begin with the raw amino-acid sequence, 415 residues long: Histidine--tRNA ligase (415 aa).

The protein belongs to the class-II aminoacyl-tRNA synthetase family. In terms of assembly, homodimer.

Its subcellular location is the cytoplasm. It catalyses the reaction tRNA(His) + L-histidine + ATP = L-histidyl-tRNA(His) + AMP + diphosphate + H(+). The sequence is that of Histidine--tRNA ligase from Clostridium botulinum (strain Langeland / NCTC 10281 / Type F).